Here is a 268-residue protein sequence, read N- to C-terminus: Urease accessory protein UreD (268 aa).

The protein belongs to the UreD family. In terms of assembly, ureD, UreF and UreG form a complex that acts as a GTP-hydrolysis-dependent molecular chaperone, activating the urease apoprotein by helping to assemble the nickel containing metallocenter of UreC. The UreE protein probably delivers the nickel.

Its subcellular location is the cytoplasm. Functionally, required for maturation of urease via the functional incorporation of the urease nickel metallocenter. The polypeptide is Urease accessory protein UreD (Lysinibacillus sphaericus (strain C3-41)).